A 681-amino-acid polypeptide reads, in one-letter code: Ribosomal L1 domain-containing protein CG13096 (681 aa).

Disordered regions lie at residues 1–248 and 579–681; these read MVKV…AKSK and DAAP…DDEE. Phosphoserine occurs at positions 15 and 17. The span at 54–74 shows a compositional bias: basic and acidic residues; that stretch reads VKKDAIKKEPEVSKKGAEKKQ. Position 89 is a phosphoserine (S89). Low complexity predominate over residues 103 to 112; it reads KPAASGAPVG. S128 carries the post-translational modification Phosphoserine. A compositionally biased stretch (low complexity) spans 189-217; the sequence is QAAPAKPAKAQPASQLQKKAKAVQKLSKP. The segment covering 599–610 has biased composition (basic and acidic residues); the sequence is KESSSEGAKADA. Residues 611 to 681 show a composition bias toward acidic residues; the sequence is ESDEEEEVEE…EDDDDDDDEE (71 aa).

This sequence belongs to the universal ribosomal protein uL1 family. Highly divergent.

The polypeptide is Ribosomal L1 domain-containing protein CG13096 (Drosophila melanogaster (Fruit fly)).